The sequence spans 289 residues: Ribosomal RNA small subunit methyltransferase H (289 aa).

Residues 40-42 (GGH), aspartate 60, phenylalanine 84, aspartate 106, and glutamine 113 contribute to the S-adenosyl-L-methionine site.

It belongs to the methyltransferase superfamily. RsmH family.

Its subcellular location is the cytoplasm. It carries out the reaction cytidine(1402) in 16S rRNA + S-adenosyl-L-methionine = N(4)-methylcytidine(1402) in 16S rRNA + S-adenosyl-L-homocysteine + H(+). Functionally, specifically methylates the N4 position of cytidine in position 1402 (C1402) of 16S rRNA. The protein is Ribosomal RNA small subunit methyltransferase H of Haemophilus influenzae (strain PittGG).